Here is a 200-residue protein sequence, read N- to C-terminus: Glycerol-3-phosphate acyltransferase (200 aa).

The next 5 helical transmembrane spans lie at 8–28, 57–77, 88–108, 114–134, and 159–179; these read ALAL…GMVL, LAAA…VLAA, IAGL…FAGG, FLGI…LAWL, and FLLG…LIFW.

Belongs to the PlsY family. Probably interacts with PlsX.

The protein resides in the cell inner membrane. The catalysed reaction is an acyl phosphate + sn-glycerol 3-phosphate = a 1-acyl-sn-glycero-3-phosphate + phosphate. Its pathway is lipid metabolism; phospholipid metabolism. Catalyzes the transfer of an acyl group from acyl-phosphate (acyl-PO(4)) to glycerol-3-phosphate (G3P) to form lysophosphatidic acid (LPA). This enzyme utilizes acyl-phosphate as fatty acyl donor, but not acyl-CoA or acyl-ACP. This is Glycerol-3-phosphate acyltransferase from Roseobacter denitrificans (strain ATCC 33942 / OCh 114) (Erythrobacter sp. (strain OCh 114)).